Reading from the N-terminus, the 122-residue chain is Small ribosomal subunit protein uS13 (122 aa).

The segment covering 97–114 (PVRGQRTHTNAKTRKGKS) has biased composition (basic residues). Positions 97 to 122 (PVRGQRTHTNAKTRKGKSRLPIAGKE) are disordered.

This sequence belongs to the universal ribosomal protein uS13 family. In terms of assembly, part of the 30S ribosomal subunit. Forms a loose heterodimer with protein S19. Forms two bridges to the 50S subunit in the 70S ribosome.

Located at the top of the head of the 30S subunit, it contacts several helices of the 16S rRNA. In the 70S ribosome it contacts the 23S rRNA (bridge B1a) and protein L5 of the 50S subunit (bridge B1b), connecting the 2 subunits; these bridges are implicated in subunit movement. Contacts the tRNAs in the A and P-sites. In Wolbachia sp. subsp. Brugia malayi (strain TRS), this protein is Small ribosomal subunit protein uS13.